Consider the following 318-residue polypeptide: Homoserine kinase (318 aa).

Position 97-107 (97-107 (PIGSGLGSSAC)) interacts with ATP.

This sequence belongs to the GHMP kinase family. Homoserine kinase subfamily.

It localises to the cytoplasm. The enzyme catalyses L-homoserine + ATP = O-phospho-L-homoserine + ADP + H(+). Its pathway is amino-acid biosynthesis; L-threonine biosynthesis; L-threonine from L-aspartate: step 4/5. Functionally, catalyzes the ATP-dependent phosphorylation of L-homoserine to L-homoserine phosphate. This Aliivibrio salmonicida (strain LFI1238) (Vibrio salmonicida (strain LFI1238)) protein is Homoserine kinase.